We begin with the raw amino-acid sequence, 351 residues long: uncharacterized protein (351 aa).

Mn(2+) is bound by residues D215, D226, H290, E319, and E333.

The protein belongs to the peptidase M24B family. Mn(2+) is required as a cofactor.

This is an uncharacterized protein from Staphylococcus aureus (strain bovine RF122 / ET3-1).